Consider the following 637-residue polypeptide: Extracellular metalloproteinase 10 (637 aa).

An N-terminal signal peptide occupies residues 1–19 (MHGLLLAATLLSLPFNAVA). Positions 20–245 (HVPPTTGLVR…VHNVVDYVAH (226 aa)) are excised as a propeptide. N-linked (GlcNAc...) asparagine glycosylation occurs at asparagine 282. Position 429 (histidine 429) interacts with Zn(2+). Glutamate 430 is a catalytic residue. Histidine 433 serves as a coordination point for Zn(2+). Asparagine 502 carries an N-linked (GlcNAc...) asparagine glycan.

This sequence belongs to the peptidase M36 family. Zn(2+) is required as a cofactor.

Its subcellular location is the secreted. Secreted metalloproteinase that allows assimilation of proteinaceous substrates. This chain is Extracellular metalloproteinase 10 (MEP10), found in Uncinocarpus reesii (strain UAMH 1704).